The primary structure comprises 489 residues: Cytochrome P450-DIT2 (489 aa).

Position 435 (cysteine 435) interacts with heme.

Belongs to the cytochrome P450 family. It depends on heme as a cofactor.

Involved in spore wall maturation. Thought to catalyze the oxidation of tyrosine residues in the formation of LL-dityrosine a precursor of the spore wall. The chain is Cytochrome P450-DIT2 (DIT2) from Saccharomyces cerevisiae (strain ATCC 204508 / S288c) (Baker's yeast).